The sequence spans 1235 residues: ATP-dependent helicase/nuclease subunit A (1235 aa).

Residues 4–470 enclose the UvrD-like helicase ATP-binding domain; sequence REYTLSQKQA…IILAENFRSM (467 aa). 25–32 serves as a coordination point for ATP; the sequence is ASAGSGKT. The UvrD-like helicase C-terminal domain occupies 501-795; the sequence is QFGAKYYPDE…KLMTIHGSKG (295 aa).

It belongs to the helicase family. AddA subfamily. In terms of assembly, heterodimer of AddA and AddB/RexB. Mg(2+) is required as a cofactor.

The enzyme catalyses Couples ATP hydrolysis with the unwinding of duplex DNA by translocating in the 3'-5' direction.. It catalyses the reaction ATP + H2O = ADP + phosphate + H(+). Functionally, the heterodimer acts as both an ATP-dependent DNA helicase and an ATP-dependent, dual-direction single-stranded exonuclease. Recognizes the chi site generating a DNA molecule suitable for the initiation of homologous recombination. The AddA nuclease domain is required for chi fragment generation; this subunit has the helicase and 3' -&gt; 5' nuclease activities. This is ATP-dependent helicase/nuclease subunit A from Pediococcus pentosaceus (strain ATCC 25745 / CCUG 21536 / LMG 10740 / 183-1w).